Consider the following 76-residue polypeptide: UPF0729 protein C18orf32 (76 aa).

The tract at residues 1-37 (MVCIPCIVIPVLLWIYKKFLEPYIYPLVSPFVSRIWP) is necessary for its localzation to the endoplasmic reticulum and lipid droplets. The tract at residues 46–76 (DTNKGKVNFKGADMNGLPTKGPTEICDKKKD) is disordered.

It belongs to the UPF0729 family. Interacts with DERL1 and AMFR. Post-translationally, undergoes ER-associated degradation (ERAD).

It is found in the endoplasmic reticulum. It localises to the lipid droplet. Its function is as follows. May activate the NF-kappa-B signaling pathway. In Homo sapiens (Human), this protein is UPF0729 protein C18orf32 (C18orf32).